Here is a 521-residue protein sequence, read N- to C-terminus: Glucose-6-phosphate isomerase (521 aa).

E351 acts as the Proton donor in catalysis. Active-site residues include H382 and K491.

This sequence belongs to the GPI family.

It localises to the cytoplasm. It carries out the reaction alpha-D-glucose 6-phosphate = beta-D-fructose 6-phosphate. It functions in the pathway carbohydrate biosynthesis; gluconeogenesis. The protein operates within carbohydrate degradation; glycolysis; D-glyceraldehyde 3-phosphate and glycerone phosphate from D-glucose: step 2/4. Functionally, catalyzes the reversible isomerization of glucose-6-phosphate to fructose-6-phosphate. This chain is Glucose-6-phosphate isomerase, found in Polaromonas naphthalenivorans (strain CJ2).